A 622-amino-acid chain; its full sequence is Chaperone protein HscA homolog (622 aa).

It belongs to the heat shock protein 70 family.

Functionally, chaperone involved in the maturation of iron-sulfur cluster-containing proteins. Has a low intrinsic ATPase activity which is markedly stimulated by HscB. This is Chaperone protein HscA homolog from Burkholderia pseudomallei (strain 1710b).